The following is a 540-amino-acid chain: Ribonuclease Y (540 aa).

The helical transmembrane segment at 4-24 (TILVPVAVAIVSVLVGGCAGY) threads the bilayer. The 64-residue stretch at 230-293 (TVSVVNLPND…EIAKRALERL (64 aa)) folds into the KH domain. Positions 356–449 (VLSHSIEVGK…VVAADTISSA (94 aa)) constitute an HD domain.

This sequence belongs to the RNase Y family.

It localises to the cell membrane. Endoribonuclease that initiates mRNA decay. The polypeptide is Ribonuclease Y (Lactobacillus gasseri (strain ATCC 33323 / DSM 20243 / BCRC 14619 / CIP 102991 / JCM 1131 / KCTC 3163 / NCIMB 11718 / NCTC 13722 / AM63)).